Consider the following 65-residue polypeptide: Alpha-conotoxin Mr1.1 (65 aa).

The N-terminal stretch at 1-21 (MGMRMMFTVFLLVVLATTVVS) is a signal peptide. The propeptide occupies 22–48 (FTSDRASDGRKAAAKDKASDLVALTVK). Intrachain disulfides connect cysteine 50–cysteine 56 and cysteine 51–cysteine 64. The interval 52–54 (SHP) is ser-Xaa-Pro motif, crucial for potent interaction with nAChR. Cysteine 64 carries the cysteine amide modification.

The protein belongs to the conotoxin A superfamily. As to expression, expressed by the venom duct.

The protein resides in the secreted. Alpha-conotoxins act on postsynaptic membranes, they bind to the nicotinic acetylcholine receptors (nAChR) and thus inhibit them. This toxin potently and reversibly inhibits alpha-9-alpha-10/CHRNA9-CHRNA10 (IC(50)=92 nM (human) and IC(50)=8.3 nM (rat)) and human alpha3-beta-2/CHRNA3-CHRNB2 nAChR (IC(50)=218.9 nM). Also moderately inhibits human alpha-3-beta-4/CHRNA3-CHRNB4 (60% inhibition at 1 uM), rat alpha-7/CHRNA7 (65% inhibition at 1 uM) and rat alpha-3-beta-2/CHRNA3-CHRNB2 nAChR (50-70% inhibition at 10 uM). In two rat pain models, this toxin shows analgesic effect. The protein is Alpha-conotoxin Mr1.1 of Conus marmoreus (Marble cone).